Reading from the N-terminus, the 210-residue chain is Somatotropin-1 (210 aa).

The N-terminal stretch at 1–22 (MGQVFLLMPVLLASCFLSQGAA) is a signal peptide. Residue histidine 38 participates in Zn(2+) binding. Cysteine 71 and cysteine 183 are oxidised to a cystine. Glutamate 192 serves as a coordination point for Zn(2+). Cysteine 200 and cysteine 208 are disulfide-bonded.

The protein belongs to the somatotropin/prolactin family.

Its subcellular location is the secreted. Growth hormone plays an important role in growth control and is involved in the regulation of several anabolic processes. Implicated as an osmoregulatory substance important for seawater adaptation. This is Somatotropin-1 (gh1) from Oncorhynchus nerka (Sockeye salmon).